The following is a 794-amino-acid chain: Transcription factor TOG1 (794 aa).

Residues Cys18, Cys21, Cys28, Cys34, Cys37, and Cys44 each contribute to the Zn(2+) site. The zn(2)-C6 fungal-type DNA-binding region spans 18–44 (CDRCHRKKIKCNSKKPCFGCIGSQSKC).

It localises to the nucleus. In terms of biological role, transcriptional activator required for growth on non-fermentable carbon sources and that regulates genes involved in fatty acid utilization. Acts as a direct activator that binds the promoters of oleate utilizing genes, encoded key enzymes in beta-oxidation and NADPH regeneration (POX1, FOX2,POT1 and IDP2), the glyoxylate shunt (MLS1 and ICL1), and gluconeogenesis (PCK1 and FBP1). Also regulates the abundance of peroxisomes that are vital for fatty acid oxidation. This Saccharomyces cerevisiae (strain ATCC 204508 / S288c) (Baker's yeast) protein is Transcription factor TOG1.